The primary structure comprises 367 residues: Peptide chain release factor 2 (367 aa).

An N5-methylglutamine modification is found at glutamine 254.

This sequence belongs to the prokaryotic/mitochondrial release factor family. In terms of processing, methylated by PrmC. Methylation increases the termination efficiency of RF2.

It is found in the cytoplasm. Its function is as follows. Peptide chain release factor 2 directs the termination of translation in response to the peptide chain termination codons UGA and UAA. The polypeptide is Peptide chain release factor 2 (Neisseria meningitidis serogroup C / serotype 2a (strain ATCC 700532 / DSM 15464 / FAM18)).